The chain runs to 336 residues: UPF0284 protein Pcal_1534 (336 aa).

The protein belongs to the UPF0284 family.

The protein is UPF0284 protein Pcal_1534 of Pyrobaculum calidifontis (strain DSM 21063 / JCM 11548 / VA1).